The primary structure comprises 597 residues: Elongation factor 4 (597 aa).

One can recognise a tr-type G domain in the interval 2–184 (KHIRNFSIIA…TIVKSIPAPE (183 aa)). Residues 14 to 19 (DHGKST) and 131 to 134 (NKID) contribute to the GTP site.

It belongs to the TRAFAC class translation factor GTPase superfamily. Classic translation factor GTPase family. LepA subfamily.

It is found in the cell inner membrane. The catalysed reaction is GTP + H2O = GDP + phosphate + H(+). In terms of biological role, required for accurate and efficient protein synthesis under certain stress conditions. May act as a fidelity factor of the translation reaction, by catalyzing a one-codon backward translocation of tRNAs on improperly translocated ribosomes. Back-translocation proceeds from a post-translocation (POST) complex to a pre-translocation (PRE) complex, thus giving elongation factor G a second chance to translocate the tRNAs correctly. Binds to ribosomes in a GTP-dependent manner. The chain is Elongation factor 4 from Aliivibrio fischeri (strain MJ11) (Vibrio fischeri).